Here is a 363-residue protein sequence, read N- to C-terminus: 2,5-diketocamphane 1,2-monooxygenase 1 (363 aa).

FMN-binding positions include M74 and 186 to 194; that span reads TGLTKNSSS.

It belongs to the bacterial luciferase oxidoreductase family. Homodimer. Likely forms a loose transient complex with a P.putida flavin reductase that provides the required FMNH(2) to the enzyme.

It catalyses the reaction (1R,4R)-bornane-2,5-dione + FMNH2 + O2 = (1R,4R)-5-oxo-1,2-campholide + FMN + H2O + H(+). It participates in terpene metabolism; (R)-camphor degradation. Its function is as follows. Involved in the degradation and assimilation of (+)-camphor, which allows P.putida strain NCIMB 10007 to grow on this enantiomer of camphor as the sole carbon source. Catalyzes the FMNH(2)-dependent lactonization of 2,5-diketocamphane via a Baeyer-Villiger oxidation to produce the unstable lactone 5-oxo-1,2-campholide with (R,R) configuration, that presumably undergoes spontaneous hydrolysis to form 2-oxo-Delta(3)-4,5,5-trimethylcyclopentenylacetate. Is also able to convert (+)-camphor and norcamphor to the corresponding lactone in vitro. Shows no conversion of (-)-camphor, (+)-fenchone, (-)-fenchone, and (+)-nopinone. Acts only on bicyclic ketones; is not active towards monocyclic ketones, aromatic ketones, the aliphatic 2-decanone, 1-indanone and progesterone. The protein is 2,5-diketocamphane 1,2-monooxygenase 1 of Pseudomonas putida (Arthrobacter siderocapsulatus).